We begin with the raw amino-acid sequence, 78 residues long: Large ribosomal subunit protein bL28 (78 aa).

Residues 1 to 21 form a disordered region; it reads MSRVCQVTGKRPVSGNNRSHA.

The protein belongs to the bacterial ribosomal protein bL28 family.

This Serratia proteamaculans (strain 568) protein is Large ribosomal subunit protein bL28.